The following is a 96-amino-acid chain: UPF0235 protein YggU (96 aa).

Belongs to the UPF0235 family.

This Salmonella typhi protein is UPF0235 protein YggU.